The chain runs to 198 residues: Ribose 1,5-bisphosphate phosphokinase PhnN (198 aa).

An ATP-binding site is contributed by 25–32 (GPSGAGKD).

This sequence belongs to the ribose 1,5-bisphosphokinase family.

The enzyme catalyses alpha-D-ribose 1,5-bisphosphate + ATP = 5-phospho-alpha-D-ribose 1-diphosphate + ADP. Its pathway is metabolic intermediate biosynthesis; 5-phospho-alpha-D-ribose 1-diphosphate biosynthesis; 5-phospho-alpha-D-ribose 1-diphosphate from D-ribose 5-phosphate (route II): step 3/3. Its function is as follows. Catalyzes the phosphorylation of ribose 1,5-bisphosphate to 5-phospho-D-ribosyl alpha-1-diphosphate (PRPP). This chain is Ribose 1,5-bisphosphate phosphokinase PhnN, found in Bradyrhizobium diazoefficiens (strain JCM 10833 / BCRC 13528 / IAM 13628 / NBRC 14792 / USDA 110).